Here is a 421-residue protein sequence, read N- to C-terminus: MLDIKLILKNKDFVISKLKQRSNFNVSEIEKLYTLGTERANILISLSELQSKRNEISSKIGEAKRNKTDALFFMDEVENIKKELSILEEKSTKIENKIQELISFIPNIPLDDVPFGKDDTDNVILKEFPKIGRGLVKAKKPHYEIGVEKDLIDFSRGAKLSGSRFIVYKNAGAKLIRALESFMLDTHEKNGYSEIMPPFLVNSKMMYGTGQLPKFKEDLFKIEGHDLYLIPTAEVPVTNLFNNEIIDLEKNSKFSSFTNCFRSEAGSAGRDTKGIIRLHQFNKVELVEFASEQKSLRAFNSVLKNAKYLLELLEIPYREVLLCTGDLGFSSRKTIDLELWLPSEQRYREVSSVSYFGDFQSRRSMIRYRDENKNTQYVHTINGSGLAIDRVLAAILEQYQNDDGSISVPKVLIPYLNVEKI.

232–234 serves as a coordination point for L-serine; it reads TAE. 262 to 264 serves as a coordination point for ATP; the sequence is RSE. Glutamate 285 contacts L-serine. An ATP-binding site is contributed by 349–352; that stretch reads EVSS. Serine 384 contributes to the L-serine binding site.

The protein belongs to the class-II aminoacyl-tRNA synthetase family. Type-1 seryl-tRNA synthetase subfamily. As to quaternary structure, homodimer. The tRNA molecule binds across the dimer.

Its subcellular location is the cytoplasm. The catalysed reaction is tRNA(Ser) + L-serine + ATP = L-seryl-tRNA(Ser) + AMP + diphosphate + H(+). The enzyme catalyses tRNA(Sec) + L-serine + ATP = L-seryl-tRNA(Sec) + AMP + diphosphate + H(+). It participates in aminoacyl-tRNA biosynthesis; selenocysteinyl-tRNA(Sec) biosynthesis; L-seryl-tRNA(Sec) from L-serine and tRNA(Sec): step 1/1. In terms of biological role, catalyzes the attachment of serine to tRNA(Ser). Is also able to aminoacylate tRNA(Sec) with serine, to form the misacylated tRNA L-seryl-tRNA(Sec), which will be further converted into selenocysteinyl-tRNA(Sec). In Mycoplasma mobile (strain ATCC 43663 / 163K / NCTC 11711) (Mesomycoplasma mobile), this protein is Serine--tRNA ligase.